Consider the following 152-residue polypeptide: Transcriptional regulator MraZ (152 aa).

2 SpoVT-AbrB domains span residues Ala-5–Glu-52 and Ala-81–Thr-124.

It belongs to the MraZ family. As to quaternary structure, forms oligomers.

The protein localises to the cytoplasm. It is found in the nucleoid. Its function is as follows. Negatively regulates its own expression and that of the subsequent genes in the proximal part of the division and cell wall (dcw) gene cluster. Acts by binding directly to DNA. May also regulate the expression of genes outside the dcw cluster. This is Transcriptional regulator MraZ from Klebsiella pneumoniae (strain 342).